Here is a 569-residue protein sequence, read N- to C-terminus: MTAPSGSTPDVDVVVVGAGPSGLTLANILGLQGVATLVVDERDTLIDYPRGVGLDDESLRTFQAIGLVERVLPHTVPNQILRFFDADRRLLAEMAPPDARFGWPKRNGFVQPLVDAELFGGLERFDHVEVRFDHRMQSCSETAGGVTVTFDGDRDPVRARYVVGCDGGRSTTRRQMGVSFDGTTSSTRWLVVDVANDPLGHPNSEVGADPARPYVSISIAHGIRRFEFMIHPDETDEQADDPAFVRRMLGQRVPYPERVDIIRHRVYTHHSRIAGSFRKGRLMLAGDAAHLMPVWQGQGYNSGIRDAANLGWKLAAVVNGQADDALLDTYDLERRKHARAMIDLSTMVGKVISPTNRGLAALRDRVIHAASVVPTLKRYILEMRFKPMPRYQQGAVYHDAQPSPTSPTGTLFIQPRVDTREEFNVLLDDVLGPGFAVVCWSNNLRAVLGDEAFDRWKGLGARFVEARPMTQLHWPGYDDADVEVVGDRTGALKKWFDVSTDSVLFVRPDRCIAGACIAQRAPEVSTALFAVLHLTREGGAGSHGEKSDGTVLHVAQSAAEPSGTSAGTP.

Residues Asp12 to Glu41 and Phe277 to Asp287 each bind FAD.

It belongs to the PheA/TfdB FAD monooxygenase family. It depends on FAD as a cofactor.

The catalysed reaction is 3-(3-hydroxyphenyl)propanoate + NADH + O2 + H(+) = 3-(2,3-dihydroxyphenyl)propanoate + NAD(+) + H2O. The enzyme catalyses (2E)-3-(3-hydroxyphenyl)prop-2-enoate + NADH + O2 + H(+) = (2E)-3-(2,3-dihydroxyphenyl)prop-2-enoate + NAD(+) + H2O. The protein operates within aromatic compound metabolism; 3-phenylpropanoate degradation. Its function is as follows. Catalyzes the insertion of one atom of molecular oxygen into position 2 of the phenyl ring of 3-(3-hydroxyphenyl)propionate (3-HPP) and hydroxycinnamic acid (3HCI). The sequence is that of 3-(3-hydroxy-phenyl)propionate/3-hydroxycinnamic acid hydroxylase from Mycolicibacterium vanbaalenii (strain DSM 7251 / JCM 13017 / BCRC 16820 / KCTC 9966 / NRRL B-24157 / PYR-1) (Mycobacterium vanbaalenii).